The following is a 237-amino-acid chain: Large ribosomal subunit protein uL1 (237 aa).

This sequence belongs to the universal ribosomal protein uL1 family. In terms of assembly, part of the 50S ribosomal subunit.

In terms of biological role, binds directly to 23S rRNA. The L1 stalk is quite mobile in the ribosome, and is involved in E site tRNA release. Functionally, protein L1 is also a translational repressor protein, it controls the translation of the L11 operon by binding to its mRNA. The chain is Large ribosomal subunit protein uL1 from Corynebacterium kroppenstedtii (strain DSM 44385 / JCM 11950 / CIP 105744 / CCUG 35717).